A 271-amino-acid polypeptide reads, in one-letter code: MEGKDTKKKKKNIIIINDKGEMRSVAKKTLDSSESSLAQSKEVGEVDEVKGMETDAEKKDEPAMESKGCCKKCSNGDARGCHSERSGNYSEQPEKQEAADGEDSSKKESPREEQTPLLDKEEADEKTEENAKPSSEKKNDAFIPPILGTSMTVANKEIFEDRENGNTVVEGWMWKKRRIFSCFWHRKYFVLTREGILKYYKADGRRHPKGNWNMKDSTEIRHYNLPSEENSHPFRVLVFFPDFSFLLAFDDKNSKDYWVEKLNETIRRLKK.

Residues 26–145 (AKKTLDSSES…EKKNDAFIPP (120 aa)) form a disordered region. Basic and acidic residues-rich tracts occupy residues 42–64 (EVGE…EPAM), 92–120 (QPEK…LLDK), and 128–140 (EENA…KKND). One can recognise a PH domain in the interval 166–267 (NTVVEGWMWK…WVEKLNETIR (102 aa)).

The chain is PH domain-containing protein ECU06_0670 from Encephalitozoon cuniculi (strain GB-M1) (Microsporidian parasite).